Reading from the N-terminus, the 521-residue chain is Ribonuclease Y (521 aa).

Residues 5–25 form a helical membrane-spanning segment; that stretch reads LLLILTAVIMLIVGFAVGAIL. The interval 77-107 is disordered; that stretch reads ELKDRRGEVQKQENRLIQREETMDRKDATLD. One can recognise a KH domain in the interval 211 to 271; that stretch reads TVTVVTLPND…IRREIARMTL (61 aa). The HD domain occupies 337–430; it reads VLNHSIEVAK…VAASDAISAA (94 aa).

This sequence belongs to the RNase Y family.

It is found in the cell membrane. Functionally, endoribonuclease that initiates mRNA decay. This is Ribonuclease Y from Latilactobacillus sakei subsp. sakei (strain 23K) (Lactobacillus sakei subsp. sakei).